The sequence spans 327 residues: G-protein coupled receptor 55 (327 aa).

The Extracellular segment spans residues 1-20 (MSQPERDNCSFDSVDKLTRT). Asparagine 8 is a glycosylation site (N-linked (GlcNAc...) asparagine). The chain crosses the membrane as a helical span at residues 21–41 (LQLAVHIPTFLLGLVLNLLAI). Residues 42–57 (RGFSAFLKKRKLDYIA) are Cytoplasmic-facing. Residues 58-78 (TSIYMINLAVFDLLLVLSLPF) traverse the membrane as a helical segment. At 79–93 (KMVLPQVESPLPSFC) the chain is on the extracellular side. A helical membrane pass occupies residues 94–114 (TLVECLYFISMYGSVFTICFI). The Cytoplasmic portion of the chain corresponds to 115-136 (SLDRFLAIQYPILASHLRSPRK). Residues 137 to 157 (TFGICCIIWMLVWIGSIPIYT) form a helical membrane-spanning segment. The Extracellular segment spans residues 158-179 (FHREVERYKCFHNMSDVTWSAS). Residue asparagine 170 is glycosylated (N-linked (GlcNAc...) asparagine). A helical transmembrane segment spans residues 180–200 (VFFPLEIFGFLLPMGIMGFCS). Topologically, residues 201 to 239 (YRSIHILLRRPDSTEDWVQQRDTKGWVQKRACIWTIATN) are cytoplasmic. The helical transmembrane segment at 240-260 (LVIFVVSFLPVHLGFFLQYLV) threads the bilayer. Residues 261 to 279 (RNRFILDCRMKQGISLFLQ) lie on the Extracellular side of the membrane. The helical transmembrane segment at 280-300 (LSLCFSNINCCLDVFCYYFVI) threads the bilayer. Residues 301-327 (KEFRMRIKAHRPSTIKLVNQDTMVSRG) lie on the Cytoplasmic side of the membrane.

The protein belongs to the G-protein coupled receptor 1 family. Highly expressed in splenic plasma cells.

The protein resides in the cell membrane. Functionally, G-protein coupled receptor that binds to several ligands including 2-arachidonoyl lysophosphatidylinositol or lysophosphatidylglucoside with high affinity, leading to rapid and transient activation of numerous intracellular signaling pathways. Induces the Ca(2+) release from intracellular stores via ERK, the heterotrimeric G protein GNA13 and RHOA leading to morphological changes including cell rounding and stress fiber formation. In macrophages, acts downstream of lysophosphatidylglucoside to inhibit the translocation of the phospholipid-transporting ABCA1 to plasma membrane and subsequent cholesterol efflux leading to lipid accumulation and foam cell formation. May be involved in hyperalgesia associated with inflammatory and neuropathic pain. In Mus musculus (Mouse), this protein is G-protein coupled receptor 55 (Gpr55).